The sequence spans 396 residues: Na(+)/H(+) antiporter NhaA 1 (396 aa).

Transmembrane regions (helical) follow at residues 15 to 35, 60 to 80, 96 to 116, 126 to 146, 155 to 175, 179 to 199, 207 to 227, 255 to 275, 290 to 312, 329 to 349, and 363 to 383; these read AGIF…VGFL, LEFW…GLEL, FLPS…FAVI, GWAI…ALLG, IFVL…IALF, ALNF…LVMC, IPFV…GIHA, SLGY…NAGV, PLGV…SWFL, LYAV…VDNL, and LAIL…AKAV.

It belongs to the NhaA Na(+)/H(+) (TC 2.A.33) antiporter family.

It localises to the cell inner membrane. The enzyme catalyses Na(+)(in) + 2 H(+)(out) = Na(+)(out) + 2 H(+)(in). In terms of biological role, na(+)/H(+) antiporter that extrudes sodium in exchange for external protons. This Campylobacter hominis (strain ATCC BAA-381 / DSM 21671 / CCUG 45161 / LMG 19568 / NCTC 13146 / CH001A) protein is Na(+)/H(+) antiporter NhaA 1.